The sequence spans 285 residues: Diaminopimelate epimerase 2 (285 aa).

Substrate is bound by residues Asn-11, Asn-63, 73 to 74, Asn-158, Asn-191, 209 to 210, and 219 to 220; these read GN, ER, and GS.

Belongs to the diaminopimelate epimerase family. In terms of assembly, homodimer.

Its subcellular location is the cytoplasm. The catalysed reaction is (2S,6S)-2,6-diaminopimelate = meso-2,6-diaminopimelate. It participates in amino-acid biosynthesis; L-lysine biosynthesis via DAP pathway; DL-2,6-diaminopimelate from LL-2,6-diaminopimelate: step 1/1. In terms of biological role, catalyzes the stereoinversion of LL-2,6-diaminopimelate (L,L-DAP) to meso-diaminopimelate (meso-DAP), a precursor of L-lysine and an essential component of the bacterial peptidoglycan. This chain is Diaminopimelate epimerase 2, found in Nostoc sp. (strain PCC 7120 / SAG 25.82 / UTEX 2576).